Here is a 313-residue protein sequence, read N- to C-terminus: Cobalamin biosynthesis protein CobD (313 aa).

5 consecutive transmembrane segments (helical) span residues 52–72, 79–99, 154–174, 204–224, and 289–309; these read VAGAVHVGLLVGAVGLLGAAL, CWPVAATATATWAALGGTSLA, VVPLLWAASSGVPAVLGYRAI, YVGARATAVLVVICAPVVGGS, and AVVLSRVVQAGAAVLAVMLVY.

Belongs to the CobD/CbiB family.

It is found in the cell membrane. Its pathway is cofactor biosynthesis; adenosylcobalamin biosynthesis. In terms of biological role, converts cobyric acid to cobinamide by the addition of aminopropanol on the F carboxylic group. This is Cobalamin biosynthesis protein CobD from Mycobacterium bovis (strain ATCC BAA-935 / AF2122/97).